A 95-amino-acid chain; its full sequence is Large ribosomal subunit protein bL25 (95 aa).

Belongs to the bacterial ribosomal protein bL25 family. Part of the 50S ribosomal subunit; part of the 5S rRNA/L5/L18/L25 subcomplex. Contacts the 5S rRNA. Binds to the 5S rRNA independently of L5 and L18.

Functionally, this is one of the proteins that binds to the 5S RNA in the ribosome where it forms part of the central protuberance. The polypeptide is Large ribosomal subunit protein bL25 (Shewanella loihica (strain ATCC BAA-1088 / PV-4)).